Consider the following 1848-residue polypeptide: MSVGELYSQCTRVWIPDPDEVWRSAELTKDYKEGDKSLQLRLEDETILEYPIDVQRNQLPFLRNPDILVGENDLTALSYLHEPAVLHNLKVRFLESNHIYTYCGIVLVAINPYEQLPIYGQDVIYTYSGQNMGDMDPHIFAVAEEAYKQMARDEKNQSIIVSGESGAGKTVSAKYAMRYFATVGGSASETNIEEKVLASSPIMEAIGNAKTTRNDNSSRFGKYIQIGFDKRYHIIGANMRTYLLEKSRVVFQADDERNYHIFYQLCAAAGLPEFKELALTSAEDFFYTSQGGDTSIEGVDDAEDFEKTRQAFTLLGVKESHQMSIFKIIASILHLGSVAIQAERDGDSCSISPQDVYLSNFCRLLGVEHSQMEHWLCHRKLVTTSETYVKTMSLQQVINARNALAKHIYAQLFGWIVEHINKALHTSLKQHSFIGVLDIYGFETFEVNSFEQFCINYANEKLQQQFNSHVFKLEQEEYMKEQIPWTLIDFYDNQPCIDLIEAKLGILDLLDEECKVPKGTDQNWAQKLYDRHSSSQHFQKPRMSNTAFIIVHFADKVEYLSDGFLEKNRDTVYEEQINILKASKFPLVADLFHDDKDPVPATTPGKGSSSKISVRSARPPMKVSNKEHKKTVGHQFRTSLHLLMETLNATTPHYVRCIKPNDEKLPFHFDPKRAVQQLRACGVLETIRISAAGYPSRWAYHDFFNRYRVLVKKRELANTDKKAICRSVLENLIKDPDKFQFGRTKIFFRAGQVAYLEKLRADKFRTATIMIQKTVRGWLQKVKYHRLKGATLTLQRYCRGHLARRLAEHLRRIRAAVVLQKHYRMQRARQAYQRVRRAAVVIQAFTRAMFVRRTYRQVLMEHKATTIQKHVRGWMARRHFQRLRDAAIVIQCAFRMLKARRELKALRIEARSAEHLKRLNVGMENKVVQLQRKIDEQNKEFKTLSEQLSVTTSTYTMEVERLKKELVHYQQSPGEDTSLRLQEEVESLRTELQRAHSERKILEDAHSREKDELRKRVADLEQENALLKDEKEQLNNQILCQSKDEFAQNSVKENLMKKELEEERSRYQNLVKEYSQLEQRYDNLRDEMTIIKQTPGHRRNPSNQSSLESDSNYPSISTSEIGDTEDALQQVEEIGLEKAAMDMTVFLKLQKRVRELEQERKKLQVQLEKREQQDSKKVQAEPPQTDIDLDPNADLAYNSLKRQELESENKKLKNDLNELRKAVADQATQNNSSHGSPDSYSLLLNQLKLAHEELEVRKEEVLILRTQIVSADQRRLAGRNAEPNINARSSWPNSEKHVDQEDAIEAYHGVCQTNSKTEDWGYLNEDGELGLAYQGLKQVARLLEAQLQAQSLEHEEEVEHLKAQLEALKEEMDKQQQTFCQTLLLSPEAQVEFGVQQEISRLTNENLDLKELVEKLEKNERKLKKQLKIYMKKAQDLEAAQALAQSERKRHELNRQVTVQRKEKDFQGMLEYHKEDEALLIRNLVTDLKPQMLSGTVPCLPAYILYMCIRHADYTNDDLKVHSLLTSTINGIKKVLKKHNDDFEMTSFWLSNTCRLLHCLKQYSGDEGFMTQNTAKQNEHCLKNFDLTEYRQVLSDLSIQIYQQLIKIAEGVLQPMIVSAMLENESIQGLSGVKPTGYRKRSSSMADGDNSYCLEAIIRQMNAFHTVMCDQGLDPEIILQVFKQLFYMINAVTLNNLLLRKDVCSWSTGMQLRYNISQLEEWLRGRNLHQSGAVQTMEPLIQAAQLLQLKKKTQEDAEAICSLCTSLSTQQIVKILNLYTPLNEFEERVTVAFIRTIQAQLQERNDPQQLLLDAKHMFPVLFPFNPSSLTMDSIHIPACLNLEFLNEV.

Methionine 1 bears the N-acetylmethionine mark. In terms of domain architecture, Myosin N-terminal SH3-like spans 8–60; the sequence is SQCTRVWIPDPDEVWRSAELTKDYKEGDKSLQLRLEDETILEYPIDVQRNQLP. Residues 21-40 form a requires for interaction with LIMA1 region; the sequence is VWRSAELTKDYKEGDKSLQL. The Myosin motor domain occupies 69 to 761; sequence VGENDLTALS…QVAYLEKLRA (693 aa). Position 163–170 (163–170) interacts with ATP; the sequence is GESGAGKT. The disordered stretch occupies residues 596–630; the sequence is KDPVPATTPGKGSSSKISVRSARPPMKVSNKEHKK. The actin-binding stretch occupies residues 640–662; the sequence is LHLLMETLNATTPHYVRCIKPND. IQ domains are found at residues 769-798, 792-821, 817-848, 840-869, 865-896, and 888-917; these read IMIQKTVRGWLQKVKYHRLKGATLTLQRYC, LTLQRYCRGHLARRLAEHLRRIRAAVVLQK, VVLQKHYRMQRARQAYQRVRRAAVVIQAFTRA, VVIQAFTRAMFVRRTYRQVLMEHKATTIQK, TTIQKHVRGWMARRHFQRLRDAAIVIQCAFRM, and IVIQCAFRMLKARRELKALRIEARSAEHLK. Coiled coils occupy residues 899–1266 and 1341–1471; these read ARRE…ILRT and RLLE…GMLE. Disordered regions lie at residues 1093–1123 and 1166–1192; these read QTPGHRRNPSNQSSLESDSNYPSISTSEIGD and QLEKREQQDSKKVQAEPPQTDIDLDPN. Over residues 1101–1121 the composition is skewed to polar residues; that stretch reads PSNQSSLESDSNYPSISTSEI. Residues 1166–1179 show a composition bias toward basic and acidic residues; it reads QLEKREQQDSKKVQ. The residue at position 1446 (serine 1446) is a Phosphoserine. Residues 1526–1803 enclose the Dilute domain; it reads TSTINGIKKV…IRTIQAQLQE (278 aa).

The protein belongs to the TRAFAC class myosin-kinesin ATPase superfamily. Myosin family. As to quaternary structure, component of the CART complex, at least composed of ACTN4, HGS/HRS, MYO5B and TRIM3. Interacts with RAB11FIP2, RAB11A, and RAB8A. Found in a complex with CFTR and RAB11A. Interacts with NPC1L1;. Interacts with LIMA1.

It localises to the cytoplasm. In terms of biological role, may be involved in vesicular trafficking via its association with the CART complex. The CART complex is necessary for efficient transferrin receptor recycling but not for EGFR degradation. Required in a complex with RAB11A and RAB11FIP2 for the transport of NPC1L1 to the plasma membrane. Together with RAB11A participates in CFTR trafficking to the plasma membrane and TF (transferrin) recycling in nonpolarized cells. Together with RAB11A and RAB8A participates in epithelial cell polarization. Together with RAB25 regulates transcytosis. Required for proper localization of bile salt export pump ABCB11 at the apical/canalicular plasma membrane of hepatocytes. The chain is Unconventional myosin-Vb (MYO5B) from Homo sapiens (Human).